Reading from the N-terminus, the 240-residue chain is UPF0173 metal-dependent hydrolase OE_2513F (240 aa).

The protein belongs to the UPF0173 family.

The chain is UPF0173 metal-dependent hydrolase OE_2513F from Halobacterium salinarum (strain ATCC 29341 / DSM 671 / R1).